The chain runs to 264 residues: MPLIDASAKIHPTALIEEGAKIGANVEIGAFCVIGKDVRIGAGTKIHSHVVIQGDTEIGEDNQIFQFASIGEINQDLKYQGEPTKTIIGHRNRIRESVTIHRGTVQGGGVTRVGNDNLFMINCHIAHDCSIGNRCIIANNGTLAGHVTLDDFVIVGGMSAIHQFVVVGSHVMLGGGSMVSQDVPPYIMAQGNHAQPFGVNLEGLKRRGFEKATMHAIRNVYKLIYRSGKTLEEAIPEIEQYAKTEAAVSLFLDFFKRSTRGIIR.

This sequence belongs to the transferase hexapeptide repeat family. LpxA subfamily. As to quaternary structure, homotrimer.

It localises to the cytoplasm. It catalyses the reaction a (3R)-hydroxyacyl-[ACP] + UDP-N-acetyl-alpha-D-glucosamine = a UDP-3-O-[(3R)-3-hydroxyacyl]-N-acetyl-alpha-D-glucosamine + holo-[ACP]. The protein operates within glycolipid biosynthesis; lipid IV(A) biosynthesis; lipid IV(A) from (3R)-3-hydroxytetradecanoyl-[acyl-carrier-protein] and UDP-N-acetyl-alpha-D-glucosamine: step 1/6. In terms of biological role, involved in the biosynthesis of lipid A, a phosphorylated glycolipid that anchors the lipopolysaccharide to the outer membrane of the cell. The chain is Acyl-[acyl-carrier-protein]--UDP-N-acetylglucosamine O-acyltransferase from Glaesserella parasuis serovar 5 (strain SH0165) (Haemophilus parasuis).